The sequence spans 197 residues: Histone chaperone asf1b-A (197 aa).

It belongs to the ASF1 family. As to quaternary structure, interacts with histone H3 and histone H4.

It localises to the nucleus. Its function is as follows. Histone chaperone that facilitates histone deposition and histone exchange and removal during nucleosome assembly and disassembly. The chain is Histone chaperone asf1b-A (asf1ba) from Danio rerio (Zebrafish).